A 475-amino-acid chain; its full sequence is Sulfate adenylyltransferase subunit 1 (475 aa).

Positions 25–239 constitute a tr-type G domain; that stretch reads KSLLRFLTCG…EVLETVEIQR (215 aa). Residues 34 to 41 are G1; that stretch reads GSVDDGKS. Position 34-41 (34-41) interacts with GTP; the sequence is GSVDDGKS. Residues 92–96 are G2; it reads GITID. The G3 stretch occupies residues 113–116; sequence DTPG. GTP contacts are provided by residues 113-117 and 168-171; these read DTPGH and NKMD. Residues 168–171 form a G4 region; the sequence is NKMD. The segment at 206–208 is G5; it reads SAL.

It belongs to the TRAFAC class translation factor GTPase superfamily. Classic translation factor GTPase family. CysN/NodQ subfamily. Heterodimer composed of CysD, the smaller subunit, and CysN.

The enzyme catalyses sulfate + ATP + H(+) = adenosine 5'-phosphosulfate + diphosphate. The protein operates within sulfur metabolism; hydrogen sulfide biosynthesis; sulfite from sulfate: step 1/3. In terms of biological role, with CysD forms the ATP sulfurylase (ATPS) that catalyzes the adenylation of sulfate producing adenosine 5'-phosphosulfate (APS) and diphosphate, the first enzymatic step in sulfur assimilation pathway. APS synthesis involves the formation of a high-energy phosphoric-sulfuric acid anhydride bond driven by GTP hydrolysis by CysN coupled to ATP hydrolysis by CysD. This Escherichia coli O9:H4 (strain HS) protein is Sulfate adenylyltransferase subunit 1.